Consider the following 237-residue polypeptide: Uridylate kinase (237 aa).

ATP is bound at residue 9–12; it reads KLSG. Gly-51 is a UMP binding site. ATP is bound by residues Gly-52 and Arg-56. Residues Asp-71 and 132-139 contribute to the UMP site; that span reads CGNPFFTT. Residues Thr-159, Tyr-165, and Asp-168 each contribute to the ATP site.

Belongs to the UMP kinase family. As to quaternary structure, homohexamer.

Its subcellular location is the cytoplasm. It carries out the reaction UMP + ATP = UDP + ADP. It participates in pyrimidine metabolism; CTP biosynthesis via de novo pathway; UDP from UMP (UMPK route): step 1/1. Its activity is regulated as follows. Inhibited by UTP. Catalyzes the reversible phosphorylation of UMP to UDP. This is Uridylate kinase from Prochlorococcus marinus (strain SARG / CCMP1375 / SS120).